Reading from the N-terminus, the 308-residue chain is Oxygen-dependent coproporphyrinogen-III oxidase (308 aa).

Serine 97 provides a ligand contact to substrate. The a divalent metal cation site is built by histidine 101 and histidine 111. The active-site Proton donor is the histidine 111. Residue 113 to 115 (NVR) participates in substrate binding. Histidine 153 and histidine 183 together coordinate a divalent metal cation. The important for dimerization stretch occupies residues 248 to 283 (YVEFNLVWDRGTHFGLQSGGRTESILMSMPPLASWS). Residue 266–268 (GGR) coordinates substrate.

It belongs to the aerobic coproporphyrinogen-III oxidase family. Homodimer. The cofactor is a divalent metal cation.

It is found in the cytoplasm. The enzyme catalyses coproporphyrinogen III + O2 + 2 H(+) = protoporphyrinogen IX + 2 CO2 + 2 H2O. It functions in the pathway porphyrin-containing compound metabolism; protoporphyrin-IX biosynthesis; protoporphyrinogen-IX from coproporphyrinogen-III (O2 route): step 1/1. In terms of biological role, involved in the heme biosynthesis. Catalyzes the aerobic oxidative decarboxylation of propionate groups of rings A and B of coproporphyrinogen-III to yield the vinyl groups in protoporphyrinogen-IX. This Polaromonas sp. (strain JS666 / ATCC BAA-500) protein is Oxygen-dependent coproporphyrinogen-III oxidase.